The sequence spans 423 residues: Serine--tRNA ligase (423 aa).

Residue 228-230 (TSE) participates in L-serine binding. Residue 259–261 (RLE) coordinates ATP. Glu-282 contacts L-serine. Residue 346 to 349 (EISS) participates in ATP binding. Ser-384 contacts L-serine.

Belongs to the class-II aminoacyl-tRNA synthetase family. Type-1 seryl-tRNA synthetase subfamily. As to quaternary structure, homodimer. The tRNA molecule binds across the dimer.

It localises to the cytoplasm. The enzyme catalyses tRNA(Ser) + L-serine + ATP = L-seryl-tRNA(Ser) + AMP + diphosphate + H(+). It carries out the reaction tRNA(Sec) + L-serine + ATP = L-seryl-tRNA(Sec) + AMP + diphosphate + H(+). Its pathway is aminoacyl-tRNA biosynthesis; selenocysteinyl-tRNA(Sec) biosynthesis; L-seryl-tRNA(Sec) from L-serine and tRNA(Sec): step 1/1. Its function is as follows. Catalyzes the attachment of serine to tRNA(Ser). Is also able to aminoacylate tRNA(Sec) with serine, to form the misacylated tRNA L-seryl-tRNA(Sec), which will be further converted into selenocysteinyl-tRNA(Sec). This chain is Serine--tRNA ligase, found in Ehrlichia canis (strain Jake).